The following is a 230-amino-acid chain: Claudin-2 (230 aa).

Topologically, residues 1-7 are cytoplasmic; it reads MASLGLQ. The helical transmembrane segment at 8–28 threads the bilayer; the sequence is LVGYILGLLGLLGTLVAMLLP. Residues 29–81 are Extracellular-facing; it reads SWKTSSYVGASIVTAVGFSKGLWMECATHSTGITQCDIYSTLLGLPADIQAAQ. A disulfide bridge connects residues cysteine 54 and cysteine 64. Residues 82 to 102 traverse the membrane as a helical segment; the sequence is AMMVTSSAISSLACIISVVGM. The Cytoplasmic segment spans residues 103–116; the sequence is RCTVFCQESRAKDR. Residues 117 to 137 form a helical membrane-spanning segment; sequence VAVAGGVFFILGGLLGFIPVA. Residues 138–162 are Extracellular-facing; it reads WNLHGILRDFYSPLVPDSMKFEIGE. A helical transmembrane segment spans residues 163-183; that stretch reads ALYLGIISSLFSLIAGIILCF. The Cytoplasmic segment spans residues 184-230; it reads SCSSQRNRSNYYDAYQAQPLATRSSPRPGQPPKVKSEFNSYSLTGYV. The interval 205 to 230 is disordered; it reads TRSSPRPGQPPKVKSEFNSYSLTGYV. Lysine 218 is covalently cross-linked (Glycyl lysine isopeptide (Lys-Gly) (interchain with G-Cter in SUMO)). Phosphoserine is present on residues serine 219 and serine 223. Residues 220 to 230 show a composition bias toward polar residues; sequence EFNSYSLTGYV. An interactions with TJP1, TJP2 and TJP3 region spans residues 229 to 230; sequence YV.

Belongs to the claudin family. As to quaternary structure, can form homo- and heteropolymers with other claudins to mediate paracellular barrier and channel functions of tight junctions in response to physiological stimuli. Homopolymers interact with CLDN3, but not CLDN1, homopolymers. Directly interacts with TJP1/ZO-1, TJP2/ZO-2 and TJP3/ZO-3. Post-translationally, the disulfide bond is necessary for pore formation, but is not required for correct protein trafficking.

It localises to the cell junction. Its subcellular location is the tight junction. The protein localises to the cell membrane. It catalyses the reaction Na(+)(in) = Na(+)(out). The catalysed reaction is K(+)(in) = K(+)(out). It carries out the reaction Rb(+)(in) = Rb(+)(out). The enzyme catalyses Li(+)(in) = Li(+)(out). It catalyses the reaction Cs(+)(in) = Cs(+)(out). The catalysed reaction is Ca(2+)(in) = Ca(2+)(out). It carries out the reaction methylamine(out) = methylamine(in). The enzyme catalyses choline(out) = choline(in). It catalyses the reaction H2O(in) = H2O(out). Functionally, forms paracellular channels: polymerizes in tight junction strands with cation- and water-selective channels through the strands, conveying epithelial permeability in a process known as paracellular tight junction permeability. In intestinal epithelium, allows for sodium and water fluxes from the peritoneal side to the lumen of the intestine to regulate nutrient absorption and clear enteric pathogens as part of mucosal immune response. In kidney, allows passive sodium and calcium reabsorption across proximal tubules from the lumen back to the bloodstream. In the hepatobiliary tract, allows paracellular water and cation fluxes in the hepatic perivenous areas and biliary epithelium to generate bile flow and maintain osmotic gradients. The chain is Claudin-2 from Homo sapiens (Human).